We begin with the raw amino-acid sequence, 78 residues long: UPF0401 protein YubL (78 aa).

Belongs to the UPF0401 family.

This chain is UPF0401 protein YubL (yubL), found in Salmonella typhi.